A 117-amino-acid chain; its full sequence is Prefoldin subunit beta (117 aa).

Belongs to the prefoldin subunit beta family. As to quaternary structure, heterohexamer of two alpha and four beta subunits.

The protein localises to the cytoplasm. Functionally, molecular chaperone capable of stabilizing a range of proteins. Seems to fulfill an ATP-independent, HSP70-like function in archaeal de novo protein folding. The sequence is that of Prefoldin subunit beta from Methanosarcina barkeri (strain Fusaro / DSM 804).